The sequence spans 444 residues: Ribosome biogenesis protein WDR12 homolog (444 aa).

Residues 7 to 87 (VLVKFVTKLP…ESTLEVEYVP (81 aa)) are ubiquitin-like (UBL) domain. The interval 91 to 123 (PPQQKNSTPHDDWVSSVDGSRCAPASSSGGSPS) is disordered. WD repeat units follow at residues 105-148 (SSVD…VASV), 150-191 (AHAG…EEDA), and 203-242 (GHED…RWAA). The tract at residues 243–264 (GTAEASKKKRKTGTANGSAAAG) is disordered. WD repeat units follow at residues 272–310 (GHLH…AADT), 312–352 (NGSK…GSDA), 360–400 (AHGG…PLGM), and 403–444 (HHTD…YIVS).

It belongs to the WD repeat WDR12/YTM1 family.

It is found in the nucleus. The protein localises to the nucleolus. The protein resides in the nucleoplasm. Functionally, required for maturation of ribosomal RNAs and formation of the large ribosomal subunit. This chain is Ribosome biogenesis protein WDR12 homolog, found in Chlamydomonas reinhardtii (Chlamydomonas smithii).